A 466-amino-acid polypeptide reads, in one-letter code: Ribulose bisphosphate carboxylase large chain (466 aa).

Residue Lys-5 is modified to N6,N6,N6-trimethyllysine. Substrate contacts are provided by Asn-114 and Thr-164. The active-site Proton acceptor is the Lys-166. Lys-168 is a substrate binding site. Mg(2+) contacts are provided by Lys-192, Asp-194, and Glu-195. At Lys-192 the chain carries N6-carboxylysine. His-285 functions as the Proton acceptor in the catalytic mechanism. Arg-286, His-318, and Ser-370 together coordinate substrate.

It belongs to the RuBisCO large chain family. Type I subfamily. As to quaternary structure, heterohexadecamer of 8 large chains and 8 small chains; disulfide-linked. The disulfide link is formed within the large subunit homodimers. It depends on Mg(2+) as a cofactor. The disulfide bond which can form in the large chain dimeric partners within the hexadecamer appears to be associated with oxidative stress and protein turnover.

It localises to the plastid. It is found in the chloroplast. The catalysed reaction is 2 (2R)-3-phosphoglycerate + 2 H(+) = D-ribulose 1,5-bisphosphate + CO2 + H2O. It carries out the reaction D-ribulose 1,5-bisphosphate + O2 = 2-phosphoglycolate + (2R)-3-phosphoglycerate + 2 H(+). Functionally, ruBisCO catalyzes two reactions: the carboxylation of D-ribulose 1,5-bisphosphate, the primary event in carbon dioxide fixation, as well as the oxidative fragmentation of the pentose substrate in the photorespiration process. Both reactions occur simultaneously and in competition at the same active site. The polypeptide is Ribulose bisphosphate carboxylase large chain (Drosera peltata (Pale sundew)).